A 350-amino-acid polypeptide reads, in one-letter code: Ion-translocating oxidoreductase complex subunit D (350 aa).

Helical transmembrane passes span 20-40 (VMLW…LFFG), 42-62 (GNLI…AAFL), 89-109 (LPQF…IVVA), and 120-140 (PFNP…VAMT). An FMN phosphoryl threonine modification is found at T178. Helical transmembrane passes span 204-224 (LIAR…VLLI), 228-248 (IITW…SLAF), 255-275 (YAPL…FFIA), 282-302 (ATSH…VYLI), and 306-326 (GNYP…VPFI).

It belongs to the NqrB/RnfD family. In terms of assembly, the complex is composed of six subunits: RnfA, RnfB, RnfC, RnfD, RnfE and RnfG. FMN is required as a cofactor.

Its subcellular location is the cell inner membrane. Functionally, part of a membrane-bound complex that couples electron transfer with translocation of ions across the membrane. This chain is Ion-translocating oxidoreductase complex subunit D, found in Marinobacter nauticus (strain ATCC 700491 / DSM 11845 / VT8) (Marinobacter aquaeolei).